A 150-amino-acid polypeptide reads, in one-letter code: UPF0756 membrane protein HDEF_0364 (150 aa).

5 consecutive transmembrane segments (helical) span residues 1 to 21, 28 to 48, 51 to 71, 88 to 108, and 123 to 143; these read MMFF…GLIS, ISVV…FPWV, YALK…IASG, ILGI…VSLM, and ILGV…AGLL.

This sequence belongs to the UPF0756 family.

It localises to the cell membrane. This chain is UPF0756 membrane protein HDEF_0364, found in Hamiltonella defensa subsp. Acyrthosiphon pisum (strain 5AT).